We begin with the raw amino-acid sequence, 364 residues long: Probable 7-methylxanthine methyltransferase 5 (364 aa).

Y19 is a binding site for S-adenosyl-L-homocysteine. T26 is a theobromine binding site. Positions 64, 69, 101, 102, 134, and 135 each coordinate S-adenosyl-L-homocysteine. The theobromine site is built by Y152, H155, and W156. Residues N172, D258, F260, and N261 each contribute to the Mg(2+) site. F314 is a binding site for theobromine.

The protein belongs to the methyltransferase superfamily. Type-7 methyltransferase family. The cofactor is Mg(2+).

It catalyses the reaction 7-methylxanthine + S-adenosyl-L-methionine = theobromine + S-adenosyl-L-homocysteine + H(+). It functions in the pathway alkaloid biosynthesis. In terms of biological role, involved in the biosynthesis of theobromine. In Theobroma cacao (Cacao), this protein is Probable 7-methylxanthine methyltransferase 5.